The following is a 954-amino-acid chain: Bifunctional glutamine synthetase adenylyltransferase/adenylyl-removing enzyme (954 aa).

The segment at 1–450 is adenylyl removase; that stretch reads MENISNKPLS…HFIETVGGRT (450 aa). The segment at 454-954 is adenylyl transferase; the sequence is GADLWTQQLW…MDIYQRILVD (501 aa).

The protein belongs to the GlnE family. The cofactor is Mg(2+).

It catalyses the reaction [glutamine synthetase]-O(4)-(5'-adenylyl)-L-tyrosine + phosphate = [glutamine synthetase]-L-tyrosine + ADP. The catalysed reaction is [glutamine synthetase]-L-tyrosine + ATP = [glutamine synthetase]-O(4)-(5'-adenylyl)-L-tyrosine + diphosphate. In terms of biological role, involved in the regulation of glutamine synthetase GlnA, a key enzyme in the process to assimilate ammonia. When cellular nitrogen levels are high, the C-terminal adenylyl transferase (AT) inactivates GlnA by covalent transfer of an adenylyl group from ATP to specific tyrosine residue of GlnA, thus reducing its activity. Conversely, when nitrogen levels are low, the N-terminal adenylyl removase (AR) activates GlnA by removing the adenylyl group by phosphorolysis, increasing its activity. The regulatory region of GlnE binds the signal transduction protein PII (GlnB) which indicates the nitrogen status of the cell. This chain is Bifunctional glutamine synthetase adenylyltransferase/adenylyl-removing enzyme, found in Shewanella woodyi (strain ATCC 51908 / MS32).